The following is a 708-amino-acid chain: Polyribonucleotide nucleotidyltransferase (708 aa).

Mg(2+) is bound by residues D490 and D496. In terms of domain architecture, KH spans 557–619; that stretch reads PRIETMTIPK…KSIDDAIRLI (63 aa). The 71-residue stretch at 629–699 folds into the S1 motif domain; it reads GEVYKGKVRS…KTGKFKLSRK (71 aa).

It belongs to the polyribonucleotide nucleotidyltransferase family. It depends on Mg(2+) as a cofactor.

The protein localises to the cytoplasm. The enzyme catalyses RNA(n+1) + phosphate = RNA(n) + a ribonucleoside 5'-diphosphate. Functionally, involved in mRNA degradation. Catalyzes the phosphorolysis of single-stranded polyribonucleotides processively in the 3'- to 5'-direction. The sequence is that of Polyribonucleotide nucleotidyltransferase from Bacteroides fragilis (strain ATCC 25285 / DSM 2151 / CCUG 4856 / JCM 11019 / LMG 10263 / NCTC 9343 / Onslow / VPI 2553 / EN-2).